We begin with the raw amino-acid sequence, 392 residues long: Nicotinate phosphoribosyltransferase (392 aa).

Histidine 214 is modified (phosphohistidine; by autocatalysis).

Belongs to the NAPRTase family. In terms of processing, transiently phosphorylated on a His residue during the reaction cycle. Phosphorylation strongly increases the affinity for substrates and increases the rate of nicotinate D-ribonucleotide production. Dephosphorylation regenerates the low-affinity form of the enzyme, leading to product release.

It carries out the reaction nicotinate + 5-phospho-alpha-D-ribose 1-diphosphate + ATP + H2O = nicotinate beta-D-ribonucleotide + ADP + phosphate + diphosphate. It functions in the pathway cofactor biosynthesis; NAD(+) biosynthesis; nicotinate D-ribonucleotide from nicotinate: step 1/1. Catalyzes the synthesis of beta-nicotinate D-ribonucleotide from nicotinate and 5-phospho-D-ribose 1-phosphate at the expense of ATP. This Xanthomonas axonopodis pv. citri (strain 306) protein is Nicotinate phosphoribosyltransferase.